A 104-amino-acid polypeptide reads, in one-letter code: Iron-sulfur cluster assembly protein CyaY (104 aa).

The protein belongs to the frataxin family.

Its function is as follows. Involved in iron-sulfur (Fe-S) cluster assembly. May act as a regulator of Fe-S biogenesis. In Aliivibrio fischeri (strain MJ11) (Vibrio fischeri), this protein is Iron-sulfur cluster assembly protein CyaY.